Reading from the N-terminus, the 252-residue chain is NADH-quinone oxidoreductase subunit E (252 aa).

C114, C119, C155, and C159 together coordinate [2Fe-2S] cluster. Residues 211-252 are disordered; the sequence is LAGLPDQRPDEGQGGPGAPTLAGLQVARKNDMQAPPTPGADE.

It belongs to the complex I 24 kDa subunit family. [2Fe-2S] cluster is required as a cofactor.

It catalyses the reaction a quinone + NADH + 5 H(+)(in) = a quinol + NAD(+) + 4 H(+)(out). Functionally, NDH-1 shuttles electrons from NADH, via FMN and iron-sulfur (Fe-S) centers, to quinones in the respiratory chain. The immediate electron acceptor for the enzyme in this species is believed to be menaquinone. Couples the redox reaction to proton translocation (for every two electrons transferred, four hydrogen ions are translocated across the cytoplasmic membrane), and thus conserves the redox energy in a proton gradient. This chain is NADH-quinone oxidoreductase subunit E (nuoE), found in Mycobacterium bovis (strain ATCC BAA-935 / AF2122/97).